Reading from the N-terminus, the 757-residue chain is MSKNSDALLWYHGKITREVAVQVLLRKGGRDGFFLIRDCGNAPEDYVLSMMFRSQILHFQINCLGDNKFSIDNGPIFQGLDMLISYYKVISDGLPCKLVDFCVGKIAPLYALKYGLDTRLHLACEEKNPNTVKELLQDSVIKENVNARSISGLTALHISCSNGDNDIVAMLLNAGADASAIDANGRTPVQVVCFYNHASTLHLLISKGSADFLKRSPNNGWVPLHEAAMRGSLECVKVLLSFNASMYPRSLDGDTPRDLALQYENYNVVEFFDNYPVNQPKTSITQWLHQNLDRNGALIILQNASMADGSFLIRSSIKCHGYYVLTLVYEKKTYHFQIKSRADRWFYIDDGPLFETLPHLVDHYMQYADGLPTLLQFPVPSAENRKRPLPPTPTKNQLKLPVPPSRPIKNNNGLPQPLPYPEFTNESDSDIFTRLECEKEKPLPKLPRPVVNHTEVPNSVNVGQKGDQTMKNNAQQNIILKESISFGKELGVGEFGSVIKGIWLSPGGKEINVAMKTLHKDKMVQGEKEFLREALVMSQLNHPCIVSLLGVCLGPPMILVQELVEMGALLDYLMDYQPEIQEVDLKLWASQIAFGMMYLELKRFVHRDLAARNILLANKKQVKISDFGLSRAVGTGSDYYQAKQGGRWPVRWYAPESINYGTFSTKSDVWSYGITLWEMFTFGDLPYGEMTGNEVVSFLEHCGRLEKPDECPIHTYSIMLSCWHIDPNKRPTFNELHSTFSTDPEYEDVRIYRDRIK.

Residues 10–102 (WYHGKITREV…GLPCKLVDFC (93 aa)) enclose the SH2 1 domain. ANK repeat units follow at residues 115–147 (GLDTRLHLACEEKNPNTVKELLQDSVIKENVNA), 151–180 (SGLTALHISCSNGDNDIVAMLLNAGADASA), 184–214 (NGRTPVQVVCFYNHASTLHLLISKGSADFLK), 219–248 (NGWVPLHEAAMRGSLECVKVLLSFNASMYP), and 252–281 (DGDTPRDLALQYENYNVVEFFDNYPVNQPK). The 93-residue stretch at 287–379 (WLHQNLDRNG…GLPTLLQFPV (93 aa)) folds into the SH2 2 domain. Disordered regions lie at residues 381-407 (SAENRKRPLPPTPTKNQLKLPVPPSRP) and 444-467 (PKLPRPVVNHTEVPNSVNVGQKGD). Residues 455–467 (EVPNSVNVGQKGD) show a composition bias toward polar residues. A Protein kinase domain is found at 484–740 (ISFGKELGVG…PTFNELHSTF (257 aa)). ATP is bound by residues 490–498 (LGVGEFGSV) and Lys516. Catalysis depends on Asp608, which acts as the Proton acceptor. Phosphotyrosine is present on Tyr746.

Belongs to the protein kinase superfamily. Tyr protein kinase family. Epithelial cells.

The enzyme catalyses L-tyrosyl-[protein] + ATP = O-phospho-L-tyrosyl-[protein] + ADP + H(+). Functionally, may be involved in signal transduction. The chain is Tyrosine-protein kinase HTK16 (HTK16) from Hydra vulgaris (Hydra).